A 77-amino-acid polypeptide reads, in one-letter code: uncharacterized protein (77 aa).

Basic residues predominate over residues 1–10 (MFNNKGRRNV). The disordered stretch occupies residues 1 to 21 (MFNNKGRRNVRNNEVRRNVPV). The span at 11-21 (RNNEVRRNVPV) shows a compositional bias: basic and acidic residues. The TRAM domain maps to 20-77 (PVKEGETYTVTIEDMGRGGDGIARVEGFVVFVPETQKGETVNVKITAVKSKFAFAEKI).

This is an uncharacterized protein from Methanocaldococcus jannaschii (strain ATCC 43067 / DSM 2661 / JAL-1 / JCM 10045 / NBRC 100440) (Methanococcus jannaschii).